A 601-amino-acid polypeptide reads, in one-letter code: uncharacterized protein (601 aa).

This sequence belongs to the chlamydial CPn_1016/CT_858/TC_0248 family.

This is an uncharacterized protein from Chlamydia muridarum (strain MoPn / Nigg).